A 365-amino-acid polypeptide reads, in one-letter code: Aminomethyltransferase (365 aa).

This sequence belongs to the GcvT family. The glycine cleavage system is composed of four proteins: P, T, L and H.

It carries out the reaction N(6)-[(R)-S(8)-aminomethyldihydrolipoyl]-L-lysyl-[protein] + (6S)-5,6,7,8-tetrahydrofolate = N(6)-[(R)-dihydrolipoyl]-L-lysyl-[protein] + (6R)-5,10-methylene-5,6,7,8-tetrahydrofolate + NH4(+). Functionally, the glycine cleavage system catalyzes the degradation of glycine. The polypeptide is Aminomethyltransferase (Aeromonas hydrophila subsp. hydrophila (strain ATCC 7966 / DSM 30187 / BCRC 13018 / CCUG 14551 / JCM 1027 / KCTC 2358 / NCIMB 9240 / NCTC 8049)).